Here is a 340-residue protein sequence, read N- to C-terminus: MNAPSFTGLPTSMLSVKMICSECREDPPNLVEEFSSGDTVCGSCGLVLGDRIIDTRSEWRTFSNSDEASGDPSRVGKVANPLLNGSQLDTTISSYDGAGAMLAKAQGRSVQVRGEKNLLTAYKEIGAMCDAISLPKVIADTAKQLYKRVDDHKALKGKSSQSIIAACIYIACRQGKVPRTFMEICTLTNVPKKEIGRVYKTLQRMLTEGGALHNSVDALKGHEYIQSSSTSAEDLMVRFCNRLMLPMSVQSAAAELARRAGLQGTLAGRSPISIAASGIYMISALMGYPKTPKEISEVTGVSDSTIRIAYKLLHAERKELIDPKWIANKAGNMDAMLPKP.

A TFIIB-type zinc finger spans residues 16-49 (VKMICSECREDPPNLVEEFSSGDTVCGSCGLVLG). Cysteine 20, cysteine 23, cysteine 41, and cysteine 44 together coordinate Zn(2+). Tandem repeats lie at residues 128–204 (MCDA…TLQR) and 239–315 (FCNR…LLHA).

The protein belongs to the TFIIB family. As to quaternary structure, associates with TFIID-IIA (DA complex) to form TFIID-IIA-IIB (DAB-complex) which is then recognized by polymerase II.

Its subcellular location is the nucleus. Functionally, general factor that plays a major role in the activation of eukaryotic genes transcribed by RNA polymerase II. This Schizosaccharomyces pombe (strain 972 / ATCC 24843) (Fission yeast) protein is Transcription initiation factor IIB (sua7).